The chain runs to 552 residues: MPSADATRGGGSAGSMGKGTLGAGDTLGHKSVLDKQRAAIEKLRAQNEQLKTELLLENKFSVRPGDPFAQALINRLQDEGDMLARKIVLEMRKTKMLDQQLSEMGSTLTTTRNNMGGIFSAKEQSTAVQKRIKLLENRLEKAYVKYNQSITHNKQLRESINNLRRERIMFESIQSNLERELAKLKRDMADMIQQANGAFEAREKAIGEMNALKAQADKEQQGFEEEWRQLTTIIEEDKKERERARAQELAMRERETQELLKMGTLSSAEKKKRITKGSWNVGYNKAMAQNVAAEKVEMYGQAFKRIQDATGIEDIDQLVNTFLAAEDQNYTLFNYVNEVNQEIEKLEDQINIMRGEINKYRETGRELDMTKSRELTEEEARLAASEAQSQLYEKRTDSALSMTTALKAGINDLFERIGCNTPAVRDLLGEEGVTEANLTAYLGIIEQRTNEILQIYAKRKAQQGTDGLAEALLAQPLTQPGNRIIIEPPSTTQEEEVEGLEPEPVEEDRPLTREHLESKVQRTLPRKLETAIKVRPAGADATGGKRGSPTRR.

The segment at 1–27 (MPSADATRGGGSAGSMGKGTLGAGDTL) is disordered. Gly residues predominate over residues 8-22 (RGGGSAGSMGKGTLG). Coiled-coil stretches lie at residues 28-59 (GHKS…LENK), 120-260 (SAKE…QELL), and 331-395 (TLFN…YEKR). 2 disordered regions span residues 482-515 (NRII…TREH) and 528-552 (LETA…PTRR). A compositionally biased stretch (acidic residues) spans 493-506 (QEEEVEGLEPEPVE).

It belongs to the ODA1/DCC2 family. Component of the outer dynein arm complex.

Its subcellular location is the cytoplasm. The protein resides in the cytoskeleton. It localises to the cilium axoneme. Functionally, component of the outer dynein arm complex required for assembly of the outer dynein arm-docking complex (ODA-DC) and the outer dynein arm onto the doublet microtubule. In Chlamydomonas reinhardtii (Chlamydomonas smithii), this protein is Outer dynein arm protein 1 (ODA1).